Here is a 103-residue protein sequence, read N- to C-terminus: Pyrimidine/purine nucleoside phosphorylase (103 aa).

This sequence belongs to the nucleoside phosphorylase PpnP family.

The catalysed reaction is a purine D-ribonucleoside + phosphate = a purine nucleobase + alpha-D-ribose 1-phosphate. The enzyme catalyses adenosine + phosphate = alpha-D-ribose 1-phosphate + adenine. It carries out the reaction cytidine + phosphate = cytosine + alpha-D-ribose 1-phosphate. It catalyses the reaction guanosine + phosphate = alpha-D-ribose 1-phosphate + guanine. The catalysed reaction is inosine + phosphate = alpha-D-ribose 1-phosphate + hypoxanthine. The enzyme catalyses thymidine + phosphate = 2-deoxy-alpha-D-ribose 1-phosphate + thymine. It carries out the reaction uridine + phosphate = alpha-D-ribose 1-phosphate + uracil. It catalyses the reaction xanthosine + phosphate = alpha-D-ribose 1-phosphate + xanthine. Its function is as follows. Catalyzes the phosphorolysis of diverse nucleosides, yielding D-ribose 1-phosphate and the respective free bases. Can use uridine, adenosine, guanosine, cytidine, thymidine, inosine and xanthosine as substrates. Also catalyzes the reverse reactions. The polypeptide is Pyrimidine/purine nucleoside phosphorylase (Shewanella frigidimarina (strain NCIMB 400)).